Here is a 378-residue protein sequence, read N- to C-terminus: Putative monoglyceride lipase (378 aa).

The short motif at 97 to 101 is the GXSXG element; it reads GHSMG. S99 functions as the Nucleophile in the catalytic mechanism. Active-site charge relay system residues include D219 and H249. Over residues 276-292 the composition is skewed to basic and acidic residues; the sequence is PSETVKSEQETAVEHPK. The segment at 276–350 is disordered; the sequence is PSETVKSEQE…TSESTTVPET (75 aa). A compositionally biased stretch (low complexity) spans 293–305; it reads PTATTSAPSASPT. The residue at position 301 (S301) is a Phosphoserine. Positions 341 to 350 are enriched in polar residues; that stretch reads TSESTTVPET.

The protein belongs to the AB hydrolase superfamily. Monoacylglycerol lipase family.

It localises to the lipid droplet. It is found in the cytoplasm. The protein resides in the endoplasmic reticulum. The protein localises to the mitochondrion outer membrane. It carries out the reaction Hydrolyzes glycerol monoesters of long-chain fatty acids.. Its pathway is glycerolipid metabolism; triacylglycerol degradation. Its function is as follows. Converts monoacylglycerides (MAG) to free fatty acids and glycerol. Has a strong preference for monounsaturated monoglycerides. Required for efficient degradation of MAG, short-lived intermediates of glycerolipid metabolism which may also function as lipid signaling molecules. Controls inactivation of the signaling lipid N-palmitoylethanolamine (PEA). Involved in fatty acid ethyl ester (FAEE) catabolism. FAEEs are non-oxidative metabolites of ethanol that are transiently incorporated into lipid droplets (LDs). Their mobilization by LD-resident FAEE hydrolases facilitates a controlled metabolism of these potentially toxic lipid metabolites. This is Putative monoglyceride lipase (mgl1) from Schizosaccharomyces pombe (strain 972 / ATCC 24843) (Fission yeast).